The chain runs to 405 residues: Exodeoxyribonuclease 7 large subunit (405 aa).

This sequence belongs to the XseA family. In terms of assembly, heterooligomer composed of large and small subunits.

The protein resides in the cytoplasm. The catalysed reaction is Exonucleolytic cleavage in either 5'- to 3'- or 3'- to 5'-direction to yield nucleoside 5'-phosphates.. In terms of biological role, bidirectionally degrades single-stranded DNA into large acid-insoluble oligonucleotides, which are then degraded further into small acid-soluble oligonucleotides. This chain is Exodeoxyribonuclease 7 large subunit, found in Syntrophomonas wolfei subsp. wolfei (strain DSM 2245B / Goettingen).